The following is a 1090-amino-acid chain: Exocyst complex component SEC5A (1090 aa).

Residues 18-128 (LKEQAKRDLT…ARKEDDGAWD (111 aa)) form a disordered region. The segment covering 45 to 69 (QQPRQQKPVAAAAAPPKKSAAAVRK) has biased composition (low complexity). Basic and acidic residues predominate over residues 109–124 (RGSDVREKGRARKEDD). Serine 180 is modified (phosphoserine). Disordered stretches follow at residues 759–783 (TSRQDNWKNGYSDEHQEEPSANTYG), 987–1010 (VETPGHNRRPTRGSEDTVSDDKQS), and 1046–1090 (APLE…PRRR). Residues 998–1009 (RGSEDTVSDDKQ) are compositionally biased toward basic and acidic residues. Over residues 1058–1082 (TYSSFRGSMDSPSRNYRGSQSSGSP) the composition is skewed to polar residues.

It belongs to the SEC5 family. The exocyst complex is composed of SEC3, SEC5, SEC6, SEC8, SEC10, EXO70A1 and EXO84B. Interacts with SEC3A and EXO70B1. Binds to EXO70H1 and EXO70B2. Binds directly to B1L.

The protein localises to the cytoplasm. Its subcellular location is the cytosol. The protein resides in the secreted. It is found in the extracellular exosome. Component of the exocyst complex involved in the docking of exocytic vesicles with fusion sites on the plasma membrane during regulated or polarized secretion. Involved in polarized cell growth and organ morphogenesis. During cytokinesis, involved in cell plate initiation, cell plate maturation and formation of new primary cell wall. Probable component of an exocyst subcomplex specifically involved in autophagy-related, Golgi-independent membrane traffic to the vacuole. Regulates autophagosome formation and autophagy-related Golgi-independent import into the vacuole. The sequence is that of Exocyst complex component SEC5A from Arabidopsis thaliana (Mouse-ear cress).